Here is a 181-residue protein sequence, read N- to C-terminus: Ribulose bisphosphate carboxylase small subunit, chloroplastic 2 (181 aa).

The N-terminal 57 residues, M1–R57, are a transit peptide targeting the chloroplast.

It belongs to the RuBisCO small chain family. As to quaternary structure, heterohexadecamer of 8 large and 8 small subunits.

The protein resides in the plastid. It is found in the chloroplast. In terms of biological role, ruBisCO catalyzes two reactions: the carboxylation of D-ribulose 1,5-bisphosphate, the primary event in carbon dioxide fixation, as well as the oxidative fragmentation of the pentose substrate. Both reactions occur simultaneously and in competition at the same active site. Although the small subunit is not catalytic it is essential for maximal activity. The chain is Ribulose bisphosphate carboxylase small subunit, chloroplastic 2 from Solanum tuberosum (Potato).